A 178-amino-acid polypeptide reads, in one-letter code: ATP synthase subunit delta (178 aa).

The protein belongs to the ATPase delta chain family. In terms of assembly, F-type ATPases have 2 components, F(1) - the catalytic core - and F(0) - the membrane proton channel. F(1) has five subunits: alpha(3), beta(3), gamma(1), delta(1), epsilon(1). F(0) has three main subunits: a(1), b(2) and c(10-14). The alpha and beta chains form an alternating ring which encloses part of the gamma chain. F(1) is attached to F(0) by a central stalk formed by the gamma and epsilon chains, while a peripheral stalk is formed by the delta and b chains.

It localises to the cell membrane. F(1)F(0) ATP synthase produces ATP from ADP in the presence of a proton or sodium gradient. F-type ATPases consist of two structural domains, F(1) containing the extramembraneous catalytic core and F(0) containing the membrane proton channel, linked together by a central stalk and a peripheral stalk. During catalysis, ATP synthesis in the catalytic domain of F(1) is coupled via a rotary mechanism of the central stalk subunits to proton translocation. Functionally, this protein is part of the stalk that links CF(0) to CF(1). It either transmits conformational changes from CF(0) to CF(1) or is implicated in proton conduction. The protein is ATP synthase subunit delta of Geobacillus stearothermophilus (Bacillus stearothermophilus).